Here is a 171-residue protein sequence, read N- to C-terminus: Ribosome maturation factor RimM (171 aa).

Residues 96 to 170 (PDSYYHFQLE…TMTVRLPDGL (75 aa)) enclose the PRC barrel domain.

The protein belongs to the RimM family. In terms of assembly, binds ribosomal protein uS19.

The protein localises to the cytoplasm. Its function is as follows. An accessory protein needed during the final step in the assembly of 30S ribosomal subunit, possibly for assembly of the head region. Essential for efficient processing of 16S rRNA. May be needed both before and after RbfA during the maturation of 16S rRNA. It has affinity for free ribosomal 30S subunits but not for 70S ribosomes. The sequence is that of Ribosome maturation factor RimM from Heliobacterium modesticaldum (strain ATCC 51547 / Ice1).